A 617-amino-acid chain; its full sequence is Probable LRR receptor-like serine/threonine-protein kinase RKF3 (617 aa).

The signal sequence occupies residues 1 to 20 (MLFLRRIAVVFFVFTSFSAA). Residues 21 to 212 (QNSTCPLDFS…PTSSGANKVK (192 aa)) lie on the Extracellular side of the membrane. 4 N-linked (GlcNAc...) asparagine glycosylation sites follow: asparagine 22, asparagine 124, asparagine 135, and asparagine 165. A helical transmembrane segment spans residues 213–233 (VLVSSFSVLLVASVLVITAWF). Residues 234 to 617 (WYCRRKKSKL…DGPSGNTNTT (384 aa)) lie on the Cytoplasmic side of the membrane. The region spanning 283 to 563 (FSRHNIIGRG…VKMLESNEFT (281 aa)) is the Protein kinase domain. Residues 289–297 (IGRGGYGNV) and lysine 311 contribute to the ATP site. Aspartate 412 functions as the Proton acceptor in the catalytic mechanism. The interval 585-617 (VSSSSGSGKLTSPTGYQAFSFGGDGPSGNTNTT) is disordered.

Belongs to the protein kinase superfamily. Ser/Thr protein kinase family. As to expression, expressed in the whole plant at low levels.

It localises to the cell membrane. It carries out the reaction L-seryl-[protein] + ATP = O-phospho-L-seryl-[protein] + ADP + H(+). The enzyme catalyses L-threonyl-[protein] + ATP = O-phospho-L-threonyl-[protein] + ADP + H(+). In Arabidopsis thaliana (Mouse-ear cress), this protein is Probable LRR receptor-like serine/threonine-protein kinase RKF3 (RKF3).